A 278-amino-acid chain; its full sequence is Ras-related protein Rab-40B (278 aa).

3 residues coordinate GTP: serine 23, glycine 26, and lysine 27. Residues serine 41–isoleucine 49 form a switch-I region. Position 69 (aspartate 69) interacts with Mg(2+). The GTP site is built by glycine 72, asparagine 126, and arginine 127. The segment at glycine 72–glutamine 88 is switch-II. One can recognise an SOCS box domain in the interval leucine 175–alanine 228. The disordered stretch occupies residues alanine 245 to serine 278. The span at serine 248–threonine 259 shows a compositional bias: basic residues. A lipid anchor (S-palmitoyl cysteine) is attached at cysteine 270. Residue cysteine 275 is the site of S-geranylgeranyl cysteine attachment.

The protein belongs to the small GTPase superfamily. Rab family. In terms of assembly, component of the cullin-5-RING E3 ubiquitin-protein ligase complex (ECS(RAB40B) complex) composed of CUL5, Elongin BC (ELOB and ELOC), RNF7/RBX2 and RAB40B; RAB40B interaction with ECS complex is GTP-independent. Binds (GTP-bound) LIMA1; interaction promotes LIMA1 subcellular localization in lamellipodia during cell migration. Interacts (GTP-bound) with TKS5/SH3PXD2A (via PX domain); interaction promotes invadopodia-mediated extracellular matrix degradation. The cofactor is Mg(2+).

The protein localises to the cell membrane. It is found in the cytoplasm. It localises to the cytosol. Its subcellular location is the cell projection. The protein resides in the lamellipodium membrane. The protein localises to the ruffle. It catalyses the reaction GTP + H2O = GDP + phosphate + H(+). The protein operates within protein modification; protein ubiquitination. With respect to regulation, regulated by guanine nucleotide exchange factors (GEFs) which promote the exchange of bound GDP for free GTP. Regulated by GTPase activating proteins (GAPs) which increase the GTP hydrolysis activity. Inhibited by GDP dissociation inhibitors (GDIs). RAB40B small GTPase acts as substrate-recognition components of the ECS(RAB40B) E3 ubiquitin ligase complex which mediates the ubiquitination of target proteins. The Rab40 subfamily belongs to the Rab family that are key regulators of intracellular membrane trafficking, from the formation of transport vesicles to their fusion with membranes. Rabs cycle between an inactive GDP-bound form and an active GTP-bound form that is able to recruit to membranes different sets of downstream effectors directly responsible for vesicle formation, movement, tethering and fusion. As part of the ECS(RAB40B) complex, GTP-bound RAB40B promotes LIMA1/EPLIN ubiquitination and degradation, thereby regulating leading-edge actin dynamics during cell migration. As part of the ECS(RAB40B) complex, GTP-bound RAB40B also ubiquitinates RAP2A GTPase which promotes its localization to lamellipodia and activation to drive cell migration. The ECS(RAB40B) complex does not mediate canonical ubiquitin-dependent degradation of RAP2. RAB40B also binds TKS5/SH3PXD2A effector independently from ECS complex to promote invadopodia-mediated extracellular matrix degradation. In Mus musculus (Mouse), this protein is Ras-related protein Rab-40B.